Consider the following 258-residue polypeptide: DNA repair protein RecO (258 aa).

It belongs to the RecO family.

In terms of biological role, involved in DNA repair and RecF pathway recombination. This is DNA repair protein RecO from Oceanobacillus iheyensis (strain DSM 14371 / CIP 107618 / JCM 11309 / KCTC 3954 / HTE831).